A 234-amino-acid chain; its full sequence is Peptidyl-prolyl cis-trans isomerase, rhodopsin-specific isozyme (234 aa).

The N-terminal stretch at 1–19 is a signal peptide; it reads MNILKILILLELIYTCVSG. Positions 29–187 constitute a PPIase cyclophilin-type domain; sequence YMDVKHQKKP…DPVIIVNCGE (159 aa). A glycan (N-linked (GlcNAc...) asparagine) is linked at N67. A helical transmembrane segment spans residues 202–222; that stretch reads ILGWIKAAGLPFCSSFIVLMI.

Belongs to the cyclophilin-type PPIase family. In terms of tissue distribution, expressed specifically in photoreceptor cells.

Its subcellular location is the membrane. The enzyme catalyses [protein]-peptidylproline (omega=180) = [protein]-peptidylproline (omega=0). In terms of biological role, PPIases accelerate the folding of proteins. It catalyzes the cis-trans isomerization of proline imidic peptide bonds in oligopeptides. Acts on the folding of rhodopsin RH1 and RH2 (but not RH3) and is required for visual transduction. In Calliphora vicina (Blue blowfly), this protein is Peptidyl-prolyl cis-trans isomerase, rhodopsin-specific isozyme (NINAA).